A 218-amino-acid polypeptide reads, in one-letter code: Embryonic polyadenylate-binding protein 2-B (218 aa).

Disordered regions lie at residues 1–24 (MSER…ELDD) and 169–218 (RTNM…NNPY). The region spanning 93-170 (RSVYVGNVDY…RTIKVLPKRT (78 aa)) is the RRM domain. Residues 198 to 209 (QRPRGRPFRGRG) show a composition bias toward basic residues.

As to quaternary structure, homodimer; Upon poly(A) binding, undergoes a dimer-monomer transition that removes the polyproline motif from the RNA recognition site and allows it to be replaced by the adenosine nucleotides of poly(A).

The protein localises to the cytoplasm. Functionally, binds the poly(A) tail of mRNA. Unable to interact with the cap-binding complex and is therefore unlikely to be involved in translation initiation. The polypeptide is Embryonic polyadenylate-binding protein 2-B (Pabpn1l-b) (Xenopus laevis (African clawed frog)).